A 335-amino-acid chain; its full sequence is Proline racemase (335 aa).

The Proton acceptor role is filled by cysteine 91. The active-site Proton donor is the cysteine 256.

The protein belongs to the proline racemase family.

The enzyme catalyses L-proline = D-proline. Its activity is regulated as follows. Inhibited by pyrrole-2-carboxylate in vitro. In terms of biological role, catalyzes the reversible interconversion of L- and D-proline. Likely functions as the proline racemase necessary for D-proline generation in order to discriminate it from the L-proline used for protein synthesis. This Acetoanaerobium sticklandii (strain ATCC 12662 / DSM 519 / JCM 1433 / CCUG 9281 / NCIMB 10654 / HF) (Clostridium sticklandii) protein is Proline racemase.